The chain runs to 349 residues: Acyl-CoA Delta(11) desaturase (349 aa).

Helical transmembrane passes span 41–61 (FLTF…CFTS) and 66–86 (TLLF…AGAH). The Histidine box-1 signature appears at 86–91 (HRLWTH). A Histidine box-2 motif is present at residues 123 to 127 (HRLHH). The chain crosses the membrane as a helical span at residues 184-204 (AVPLIGTVCFALPTLIPVYCW). The Histidine box-3 signature appears at 263-267 (HNYHH). The chain crosses the membrane as a helical span at residues 282–302 (FLNLTTLFIDFCAWFGWAYDL).

It belongs to the fatty acid desaturase type 1 family. It depends on Fe cation as a cofactor. In terms of tissue distribution, adult female pheromone gland. Increases by two or three orders of magnitude during the first 2 days after adult eclosion.

Its subcellular location is the endoplasmic reticulum membrane. The enzyme catalyses an 11,12-saturated fatty acyl-CoA + 2 Fe(II)-[cytochrome b5] + O2 + 2 H(+) = an (11Z)-Delta(11)-fatty acyl-CoA + 2 Fe(III)-[cytochrome b5] + 2 H2O. Its function is as follows. Catalyzes the formation of Delta(11) fatty acyl precursors in the pheromone gland. This is Acyl-CoA Delta(11) desaturase (D11DS) from Trichoplusia ni (Cabbage looper).